We begin with the raw amino-acid sequence, 481 residues long: Trigger factor (481 aa).

The PPIase FKBP-type domain occupies 174 to 261 (GDIAVVSFKG…LKDLKEKELP (88 aa)). Residues 435 to 481 (VKEKTTKASQASKTTKAKKTTTKTTKATKTATKTTKATKTQNKKEKK) are disordered. Residues 456-474 (TKTTKATKTATKTTKATKT) are compositionally biased toward low complexity.

The protein belongs to the FKBP-type PPIase family. Tig subfamily.

It localises to the cytoplasm. The enzyme catalyses [protein]-peptidylproline (omega=180) = [protein]-peptidylproline (omega=0). Involved in protein export. Acts as a chaperone by maintaining the newly synthesized protein in an open conformation. Functions as a peptidyl-prolyl cis-trans isomerase. The chain is Trigger factor from Prochlorococcus marinus (strain MIT 9312).